Here is a 1883-residue protein sequence, read N- to C-terminus: Nuclear pore complex protein Nup153 (1883 aa).

A compositionally biased stretch (basic and acidic residues) spans 1–17 (MEDAQEQRESSQAELAK). 9 disordered regions span residues 1 to 57 (MEDA…SIMG), 70 to 116 (SLSG…RRIM), 176 to 227 (AVAA…LELE), 400 to 439 (RSELSAAAGGCGDSQSESDMNEYHDNGEGHDGLRPSHYNS), 498 to 518 (RLLSGSASNSGSASASSSPFY), 580 to 604 (PSDSGSLAETSVGQGGSKKPGTGLS), 627 to 657 (MGSSIKEHQSSRQQRQGTPATPYLRSTSASR), 694 to 769 (TQNS…LPQI), and 791 to 812 (VSKPSTTDPIQSSKSSNTNLST). Positions 29–41 (EESEEEEEEEDES) are enriched in acidic residues. A compositionally biased stretch (polar residues) spans 73-101 (GWFSPSSKDGNDALSSPANLRQSQPRQSN). The segment covering 105 to 115 (TTKRKRGRRRI) has biased composition (basic residues). Residues 182–209 (GDEDEAEEDELEEDDEDGDEEDDDEEQE) show a composition bias toward acidic residues. A compositionally biased stretch (basic and acidic residues) spans 420–433 (NEYHDNGEGHDGLR). The span at 498-515 (RLLSGSASNSGSASASSS) shows a compositional bias: low complexity. A compositionally biased stretch (polar residues) spans 582-591 (DSGSLAETSV). Over residues 627 to 636 (MGSSIKEHQS) the composition is skewed to basic and acidic residues. Composition is skewed to polar residues over residues 637 to 657 (SRQQRQGTPATPYLRSTSASR) and 694 to 706 (TQNSRDVVHSQNV). Residues 736–748 (HTNKMRSRLSHQT) show a composition bias toward basic residues. Residues 802-812 (SSKSSNTNLST) are compositionally biased toward low complexity. RanBP2-type zinc fingers lie at residues 903 to 932 (SSKEWECDTCMVRNKPEINKCVACETAKPV), 962 to 993 (KKSTTAWECDACMLSNKAEASKCIACETPRKT), 1009 to 1038 (KSNEWECSVCLVRNKVEVSKCVACESAKPG), 1067 to 1097 (KSATAWECDACMLSNKAEASKCIACETPRKS), and 1126 to 1155 (KANMWECQTCLVMNKSSDEECIACQTPNSQ). Residues C909, C912, C923, C926, C970, C973, C984, C987, C1015, C1018, C1029, C1032, C1074, C1077, C1088, and C1091 each contribute to the Zn(2+) site. A disordered region spans residues 1173–1197 (SASFSGSLSRPSSRSSSGSTSTCGS). The RanBP2-type 6 zinc-finger motif lies at 1237 to 1266 (KTSTWECEACLAKNDMSRKTCICCEQMMPE). 22 repeat units span residues 1287–1288 (FG), 1315–1316 (FG), 1317–1318 (FG), 1340–1341 (FG), 1353–1354 (FG), 1415–1416 (FG), 1469–1470 (FG), 1511–1512 (FG), 1528–1529 (FG), 1548–1549 (FG), 1586–1587 (FG), 1599–1600 (FG), 1613–1614 (FG), 1647–1648 (FG), 1653–1654 (FG), 1672–1673 (FG), 1694–1695 (FG), 1724–1725 (FG), 1737–1738 (FG), 1748–1749 (FG), 1768–1769 (FG), and 1785–1786 (FG). Residues 1287–1786 (FGFSHVKEVV…AASSAPFVFG (500 aa)) form a 22 X 2 AA repeats of F-G region. Residues 1301–1323 (ETTTTPAPTSAQFSFGFGQSNQG) show a composition bias toward polar residues. Residues 1301-1331 (ETTTTPAPTSAQFSFGFGQSNQGKDVADSKK) are disordered. The disordered stretch occupies residues 1449-1473 (SAVSSTSSSQQPVAKAPTLGFGVSS). The tract at residues 1597–1616 (TTFGASSGSGTTTTPSFGWS) is disordered. Positions 1855–1883 (NPPAAGNSAQSSQTARRKIRAPVRRLPPR) are disordered. Residues 1869 to 1883 (ARRKIRAPVRRLPPR) show a composition bias toward basic residues.

The protein belongs to the NUP153 family. In terms of assembly, part of the nuclear pore complex (NPC). Associates with male-specific lethal (MSL) histone acetyltransferase complex. Zn(2+) is required as a cofactor. As to expression, expressed in adult male accessory glands (at protein level).

Its subcellular location is the nucleus. It localises to the nucleus membrane. It is found in the nuclear pore complex. The protein resides in the chromosome. The protein localises to the cytoplasm. Its subcellular location is the cytoskeleton. It localises to the spindle. Its function is as follows. Component of the nuclear pore complex (NPC), a complex required for the trafficking across the nuclear envelope. Functions as a scaffolding element in the nuclear phase of the NPC. Essential for the nuclear import of nuclear localization signal (NLS)-containing proteins in a Importin alpha/Importin beta receptor-dependent manner. Required for nuclear import of Mad. Plays a role in chromosomal organization and gene expression regulation; stimulates transcription by promoting the formation of an open chromatin environment. Binds chromatin to nucleoporin-associated regions (NARs) that define transcriptionally active regions of the genome. Associates with extended chromosomal regions that alternate between domains of high density binding with those of low occupancy. Preferentially binds to NARs of the male X chromosome. In males, together with Mgtor, required for the localization of the male-specific lethal (MSL) histone acetyltransferase complex to the X chromosome and therefore for the transcription of dosage compensation genes. May play a role in double strand break DNA repair. The chain is Nuclear pore complex protein Nup153 (Nup153) from Drosophila melanogaster (Fruit fly).